A 331-amino-acid chain; its full sequence is uncharacterized protein (331 aa).

Disordered stretches follow at residues 131 to 163 (ISHA…KKRS) and 190 to 209 (DEQK…VQSS). Basic residues predominate over residues 140 to 162 (RPKPTKPRASRKRAAIAQSKKKR). Residues 195–209 (RQSTSQPDKEIVQSS) are compositionally biased toward polar residues.

This is an uncharacterized protein from Caenorhabditis elegans.